The chain runs to 235 residues: MGNGMTKVLPGLYLGNFIDAKDPDQLGRNKITHIISIHESPQPLLQDITYLRISVSDTPEVPIKKHFKECVHFIHSCRLNGGNCLVHCFAGISRSTTIVIAYVMTVTGLGWQEVLEAIKASRPIANPNPGFRQQLEEFGWANSQKLRRQLEERFGEIPFRDEEDLRALLPLCRRCRQGSATSAASATTASSAAEGTLQRLVPRSPRDSHQPLPLLARVKQTFFCLPRCLSRKGGK.

Residue Gly2 is the site of N-myristoyl glycine attachment. The Tyrosine-protein phosphatase domain occupies 4 to 144 (GMTKVLPGLY…LEEFGWANSQ (141 aa)). Cys88 serves as the catalytic Phosphocysteine intermediate. Residues 183–193 (AASATTASSAA) are compositionally biased toward low complexity. The tract at residues 183–212 (AASATTASSAAEGTLQRLVPRSPRDSHQPL) is disordered.

This sequence belongs to the protein-tyrosine phosphatase family. Non-receptor class dual specificity subfamily. As to expression, isoform 1 is expressed in testis; predominantly in developing spermatocytes (at protein level). Isoform 2 is highly expressed in testis. Expressed in spinal cord and specifically in oligodendroglial cells. Expressed in embryonic brain cortex; down-regulated in mice with experimental autoimmune encephalomyelitis (EAE).

The protein resides in the cell membrane. It carries out the reaction O-phospho-L-tyrosyl-[protein] + H2O = L-tyrosyl-[protein] + phosphate. The catalysed reaction is O-phospho-L-seryl-[protein] + H2O = L-seryl-[protein] + phosphate. The enzyme catalyses O-phospho-L-threonyl-[protein] + H2O = L-threonyl-[protein] + phosphate. In terms of biological role, may dephosphorylate MAPK13, ATF2, ERBB3, PDGFRB and SNX6. Functionally, may play a role in the regulation of oligodendrocyte differentiation. May play a role in the regulation of myelin formation. Involved in the regulation of Erk1/2 phosphorylation in Schwann cells; the signaling may be linked to the regulation of myelination. The sequence is that of Dual specificity protein phosphatase 15 from Mus musculus (Mouse).